A 166-amino-acid polypeptide reads, in one-letter code: 16S rRNA aminocarboxypropyltransferase (166 aa).

Residues Thr17, Val62, Ile84, Tyr99, and Ser103 each coordinate S-adenosyl-L-methionine.

It belongs to the TDD superfamily. TSR3 family.

The protein localises to the cytoplasm. It carries out the reaction an N(1)-methylpseudouridine in rRNA + S-adenosyl-L-methionine = N(1)-methyl-N(3)-[(3S)-3-amino-3-carboxypropyl]pseudouridine in rRNA + S-methyl-5'-thioadenosine + H(+). Functionally, aminocarboxypropyltransferase that catalyzes the aminocarboxypropyl transfer on pseudouridine corresponding to position 914 in M.jannaschii 16S rRNA. It constitutes the last step in biosynthesis of the hypermodified N1-methyl-N3-(3-amino-3-carboxypropyl) pseudouridine (m1acp3-Psi). The chain is 16S rRNA aminocarboxypropyltransferase from Saccharolobus solfataricus (strain ATCC 35092 / DSM 1617 / JCM 11322 / P2) (Sulfolobus solfataricus).